Here is a 439-residue protein sequence, read N- to C-terminus: Oxysterol-binding protein 6 (439 aa).

Disordered stretches follow at residues 1–40 (MSAKVASNKEAPLTEDSVSDLSSDGVEAEGVDQTENSGAD) and 409–439 (ESSTPNLSKVDSSAKIENSIPVDNSIPQTTN). 2 stretches are compositionally biased toward polar residues: residues 409–419 (ESSTPNLSKVD) and 429–439 (PVDNSIPQTTN).

It belongs to the OSBP family.

The chain is Oxysterol-binding protein 6 (osbF) from Dictyostelium discoideum (Social amoeba).